The chain runs to 152 residues: Large ribosomal subunit protein bL17 (152 aa).

The disordered stretch occupies residues 121–140 (APSASQKTGKQDRAKRVKGS).

It belongs to the bacterial ribosomal protein bL17 family. Part of the 50S ribosomal subunit. Contacts protein L32.

This is Large ribosomal subunit protein bL17 from Pelodictyon phaeoclathratiforme (strain DSM 5477 / BU-1).